Reading from the N-terminus, the 556-residue chain is TNF receptor-associated factor 6-A (556 aa).

The RING-type; degenerate zinc-finger motif lies at 72 to 111 (CPICLMALREAVQTPCGHRFCKACILKSLRNAGHKCPVDN). 2 consecutive TRAF-type zinc fingers follow at residues 148 to 204 (RHLE…EDKS) and 205 to 261 (GHEL…HNLA). The region spanning 384-533 (NGVFIWRIKG…NDTLLVRCSV (150 aa)) is the MATH domain.

The protein belongs to the TNF receptor-associated factor family. A subfamily. Homotrimer. Homooligomer. Interacts with tifa. As to expression, highly expressed in ovary and moderately expressed in kidney, spleen, stomach, colon and testis.

Its subcellular location is the cytoplasm. It is found in the cell cortex. The protein localises to the nucleus. The protein resides in the lipid droplet. The catalysed reaction is S-ubiquitinyl-[E2 ubiquitin-conjugating enzyme]-L-cysteine + [acceptor protein]-L-lysine = [E2 ubiquitin-conjugating enzyme]-L-cysteine + N(6)-ubiquitinyl-[acceptor protein]-L-lysine.. The protein operates within protein modification; protein ubiquitination. E3 ubiquitin ligase that, together with UBE2N and UBE2V1, mediates the synthesis of 'Lys-63'-linked-polyubiquitin chains conjugated to proteins, such as IKBKG, IRAK1, AKT1 and AKT2. Also mediates ubiquitination of free/unanchored polyubiquitin chain that leads to MAP3K7 activation. The protein is TNF receptor-associated factor 6-A (traf6-a) of Xenopus laevis (African clawed frog).